We begin with the raw amino-acid sequence, 252 residues long: Imidazole glycerol phosphate synthase subunit HisF (252 aa).

Active-site residues include Asp11 and Asp130.

The protein belongs to the HisA/HisF family. As to quaternary structure, heterodimer of HisH and HisF.

Its subcellular location is the cytoplasm. It carries out the reaction 5-[(5-phospho-1-deoxy-D-ribulos-1-ylimino)methylamino]-1-(5-phospho-beta-D-ribosyl)imidazole-4-carboxamide + L-glutamine = D-erythro-1-(imidazol-4-yl)glycerol 3-phosphate + 5-amino-1-(5-phospho-beta-D-ribosyl)imidazole-4-carboxamide + L-glutamate + H(+). It functions in the pathway amino-acid biosynthesis; L-histidine biosynthesis; L-histidine from 5-phospho-alpha-D-ribose 1-diphosphate: step 5/9. IGPS catalyzes the conversion of PRFAR and glutamine to IGP, AICAR and glutamate. The HisF subunit catalyzes the cyclization activity that produces IGP and AICAR from PRFAR using the ammonia provided by the HisH subunit. This chain is Imidazole glycerol phosphate synthase subunit HisF, found in Bacillus velezensis (strain DSM 23117 / BGSC 10A6 / LMG 26770 / FZB42) (Bacillus amyloliquefaciens subsp. plantarum).